The chain runs to 1653 residues: Protein strawberry notch (1653 aa).

5 disordered regions span residues 1 to 46, 190 to 211, 237 to 265, 317 to 345, and 883 to 1043; these read MTSK…GRDL, GSPA…GGAI, GSNA…PNPG, NNQK…VKGN, and SVAD…PSGS. The span at 11–36 shows a compositional bias: acidic residues; sequence DADDDNDNFDEDDSGSDFDDDEDPDQ. Residues S24 and S26 each carry the phosphoserine modification. Residues 194 to 205 are compositionally biased toward polar residues; that stretch reads ARSSGNAGTTGS. The segment covering 256-265 has biased composition (low complexity); it reads SPTGGIPNPG. Gly residues predominate over residues 329 to 342; that stretch reads GSGGPAGGAPGSGV. Residues 883 to 901 show a composition bias toward low complexity; it reads SVADSTSSLSNNSNITTAA. Residues S929 and S931 each carry the phosphoserine modification. Residues 966-975 are compositionally biased toward acidic residues; sequence IDDEDEDHDV. The segment covering 980-998 has biased composition (polar residues); sequence RSVASDASSDFNPFFSGSD. Positions 1008 to 1027 are enriched in basic residues; that stretch reads RSKKSKKAQKKSKKKVKKEK. Residues 1064–1125 are a coiled coil; the sequence is LSTQDKIQDL…RKIERLGARL (62 aa).

This sequence belongs to the SBNO family. As to quaternary structure, interacts with vg for function in the wing disk. Interacts with Su(H) for function in the eye disk. In terms of tissue distribution, at stage 8, when the formation of the midline precursor cells depends on Notch signaling, high level of expression is seen in the midline precursor cells and a lower level in the surrounding epidermal cells. Between stages 11 and 14, expression is uniform throughout the epidermis, and at stage 16, high level of expression is restricted to the central nervous system. Expressed in the larval leg, wing and eye imaginal disks. Expression is over the wing disk and accumulates within the pleural region.

The protein resides in the nucleus. Its function is as follows. Notch pathway component, may contribute to the specificity between lateral and inductive Notch signaling pathways in the wing disk. Required during many developmental stages including oogenesis, embryogenesis and imaginal development of the eye, wing and leg. Ebi and sno regulate EGFR-dependent Delta transcription in the developing eye, by antagonizing a repressor function of Suppressor of Hairless (Su(H)). They are required in the R-cells for normal cone cell development. This is Protein strawberry notch from Drosophila melanogaster (Fruit fly).